The primary structure comprises 175 residues: ATP synthase subunit b 2 (175 aa).

A helical transmembrane segment spans residues 20–40 (LIFWTAVTFVIVLLILKKFAW).

The protein belongs to the ATPase B chain family. As to quaternary structure, F-type ATPases have 2 components, F(1) - the catalytic core - and F(0) - the membrane proton channel. F(1) has five subunits: alpha(3), beta(3), gamma(1), delta(1), epsilon(1). F(0) has four main subunits: a(1), b(2) and c(10-14). The alpha and beta chains form an alternating ring which encloses part of the gamma chain. F(1) is attached to F(0) by a central stalk formed by the gamma and epsilon chains, while a peripheral stalk is formed by the delta and b chains.

The protein localises to the cell inner membrane. In terms of biological role, f(1)F(0) ATP synthase produces ATP from ADP in the presence of a proton or sodium gradient. F-type ATPases consist of two structural domains, F(1) containing the extramembraneous catalytic core and F(0) containing the membrane proton channel, linked together by a central stalk and a peripheral stalk. During catalysis, ATP synthesis in the catalytic domain of F(1) is coupled via a rotary mechanism of the central stalk subunits to proton translocation. Its function is as follows. Component of the F(0) channel, it forms part of the peripheral stalk, linking F(1) to F(0). The polypeptide is ATP synthase subunit b 2 (Prosthecochloris aestuarii (strain DSM 271 / SK 413)).